The primary structure comprises 248 residues: Putative eukaryotic initiation factor 4A-like protein (248 aa).

Residues 14–42 carry the Q motif motif; sequence VGFASLGLNEQLINNIKRYGITKLTPFQM. Residues 45 to 239 form the Helicase ATP-binding domain; it reads IKEIKENSNV…NTFIKIPKII (195 aa). Residue 58-65 coordinates ATP; sequence SIEGTGRT. The short motif at 185–188 is the DEAD box element; it reads DELD.

The protein belongs to the DEAD box helicase family. eIF4A subfamily.

This Dictyostelium discoideum (Social amoeba) protein is Putative eukaryotic initiation factor 4A-like protein.